Consider the following 1342-residue polypeptide: DNA-directed RNA polymerase subunit beta (1342 aa).

An N6-acetyllysine mark is found at Lys1022 and Lys1200.

It belongs to the RNA polymerase beta chain family. The RNAP catalytic core consists of 2 alpha, 1 beta, 1 beta' and 1 omega subunit. When a sigma factor is associated with the core the holoenzyme is formed, which can initiate transcription.

It carries out the reaction RNA(n) + a ribonucleoside 5'-triphosphate = RNA(n+1) + diphosphate. Its function is as follows. DNA-dependent RNA polymerase catalyzes the transcription of DNA into RNA using the four ribonucleoside triphosphates as substrates. In Escherichia coli O6:K15:H31 (strain 536 / UPEC), this protein is DNA-directed RNA polymerase subunit beta.